Here is a 53-residue protein sequence, read N- to C-terminus: uncharacterized protein (53 aa).

A helical transmembrane segment spans residues 26–46 (CYLLFCFLECFLNLFKKCGVF).

It belongs to the plectrovirus ORF11 family.

The protein localises to the host membrane. This is an uncharacterized protein from Spiroplasma virus SpV1-R8A2 B (SpV1).